The primary structure comprises 460 residues: MAAAPGGSAPPAGPSPRLAFSTADSGGGMSGLNPGPAVPMKDHDAIKLFVGQIPRGLDEQDLKPLFEEFGRIYELTVLKDRLTGLHKGCAFLTYCARDSALKAQSALHEQKTLPGMNRPIQVKPAASEGRGEDRKLFVGMLGKQQGEEDVRRLFQPFGHIEECTVLRSPDGTSKGCAFVKFGSQGEAQAAIQGLHGSRTMTGASSSLVVKLADTDRERALRRMQQMAGQLGAFHPAPLPLGACGAYTTAILQHQAALLAAAQGPGLGQVAAVAAQMQHVAAFSLVAAPLLPAAANTSPGGNGPGALPGLPAPMGVNGFGSLTPQSNGQPGSDTLYNNGVSPYPAAYPSAYAPASTAFSQQPSALPQQQREGPEGCNLFIYHLPQEFGDAELIQTFLPFGAVVSAKVFVDRATNQSKCFGFVSFDNPTSAQTAIQAMNGFQIGMKRLKVQLKRPKDANRPY.

Residues 1–10 (MAAAPGGSAP) are compositionally biased toward low complexity. A disordered region spans residues 1 to 37 (MAAAPGGSAPPAGPSPRLAFSTADSGGGMSGLNPGPA). 2 RRM domains span residues 46-127 (IKLF…PAAS) and 134-214 (RKLF…LADT). A disordered region spans residues 316-336 (NGFGSLTPQSNGQPGSDTLYN). The span at 319–336 (GSLTPQSNGQPGSDTLYN) shows a compositional bias: polar residues. One can recognise an RRM 3 domain in the interval 375–453 (CNLFIYHLPQ…KRLKVQLKRP (79 aa)).

The protein belongs to the CELF/BRUNOL family.

The protein localises to the nucleus. It is found in the cytoplasm. RNA-binding protein implicated in the regulation of pre-mRNA alternative splicing. Mediates exon inclusion and/or exclusion in pre-mRNA that are subject to tissue-specific and developmentally regulated alternative splicing. Specifically activates exon 5 inclusion of TNNT2 in a muscle-specific splicing enhancer (MSE)-dependent manner. Promotes also exon exclusion of INSR pre-mRNA. The chain is CUGBP Elav-like family member 6 (Celf6) from Mus musculus (Mouse).